Consider the following 647-residue polypeptide: Nucleolar GTP-binding protein 1 (647 aa).

One can recognise an OBG-type G domain in the interval 168–340 (RTLLICGYPN…VRNKACEKLL (173 aa)). GTP is bound by residues 174 to 181 (GYPNVGKS), 220 to 224 (DTPGI), and 288 to 291 (NKTD). Ser563 carries the phosphoserine modification. Positions 594-647 (ADGSMRSKADRMAKMERRERNRHAKQGESDRHNAVSLSKHLFSGKRGVGKTDFR) are disordered. Over residues 598-626 (MRSKADRMAKMERRERNRHAKQGESDRHN) the composition is skewed to basic and acidic residues.

Belongs to the TRAFAC class OBG-HflX-like GTPase superfamily. OBG GTPase family. NOG subfamily. Associated with nucleolar and cytoplasmic pre-60S particles. Directly interacts with RLP24.

It is found in the nucleus. It localises to the nucleolus. In terms of biological role, involved in the biogenesis of the 60S ribosomal subunit. This is Nucleolar GTP-binding protein 1 (NOG1) from Saccharomyces cerevisiae (strain ATCC 204508 / S288c) (Baker's yeast).